A 236-amino-acid polypeptide reads, in one-letter code: Small ribosomal subunit protein eS6 (236 aa).

A phosphoserine mark is found at Ser232 and Ser233.

The protein belongs to the eukaryotic ribosomal protein eS6 family. In terms of processing, phosphorylated.

This chain is Small ribosomal subunit protein eS6 (RPS6), found in Kluyveromyces lactis (strain ATCC 8585 / CBS 2359 / DSM 70799 / NBRC 1267 / NRRL Y-1140 / WM37) (Yeast).